The following is a 220-amino-acid chain: MMKCLFLLCLCLLPIVVFSSTFTSQNLIDLPSESPVPKPVLDTNGKELNPNSSYRIISIGRGALGGDVYLGKSPNSDAPCPDGVFRYNSDVGPSGTPVRFIPLSTNIFEDQLLNIQFNIPTVKLCVSYTIWKVGNLNAHLRTMLLETGGTIGQADSSYFKIVKSSKFGYNLLYCPITRHFLCPFCRDDNFCAKVGVVIQNGKRRLALVNENPLDVLFQEV.

Positions 1 to 23 (MMKCLFLLCLCLLPIVVFSSTFT) are cleaved as a signal peptide. Residues 24–32 (SQNLIDLPS) constitute a propeptide that is removed on maturation. The Vacuolar targeting signal motif lies at 26–31 (NLIDLP). A glycan (N-linked (GlcNAc...) asparagine) is linked at Asn-51. Disulfide bonds link Cys-80-Cys-125 and Cys-174-Cys-185.

This sequence belongs to the protease inhibitor I3 (leguminous Kunitz-type inhibitor) family.

The protein localises to the vacuole. Its function is as follows. Inhibitor of cathepsin D (aspartic protease). May also inhibit trypsin and chymotrypsin (serine proteases). Protects the plant by inhibiting proteases of invading organisms. The protein is Aspartic protease inhibitor 5 of Solanum tuberosum (Potato).